We begin with the raw amino-acid sequence, 259 residues long: Hydroxyacylglutathione hydrolase (259 aa).

Positions 56, 58, 60, 61, 112, 133, and 171 each coordinate Zn(2+).

Belongs to the metallo-beta-lactamase superfamily. Glyoxalase II family. Monomer. It depends on Zn(2+) as a cofactor.

It carries out the reaction an S-(2-hydroxyacyl)glutathione + H2O = a 2-hydroxy carboxylate + glutathione + H(+). It functions in the pathway secondary metabolite metabolism; methylglyoxal degradation; (R)-lactate from methylglyoxal: step 2/2. Functionally, thiolesterase that catalyzes the hydrolysis of S-D-lactoyl-glutathione to form glutathione and D-lactic acid. This Pseudomonas putida (strain GB-1) protein is Hydroxyacylglutathione hydrolase.